A 412-amino-acid polypeptide reads, in one-letter code: Flap endonuclease 1-B (412 aa).

The interval 1–105 (MGIKGLTKLL…KELAKRSLKR (105 aa)) is N-domain. Aspartate 34 serves as a coordination point for Mg(2+). Arginine 71 is a binding site for DNA. Residues aspartate 87, glutamate 159, glutamate 161, aspartate 180, and aspartate 182 each contribute to the Mg(2+) site. An I-domain region spans residues 123-254 (LIEKFSKRTV…QRALKLIRQH (132 aa)). Glutamate 159 lines the DNA pocket. The DNA site is built by glycine 232 and aspartate 234. Aspartate 234 is a Mg(2+) binding site.

This sequence belongs to the XPG/RAD2 endonuclease family. FEN1 subfamily. Interacts with PCNA. Three molecules of FEN1 bind to one PCNA trimer with each molecule binding to one PCNA monomer. PCNA stimulates the nuclease activity without altering cleavage specificity. Mg(2+) is required as a cofactor. Post-translationally, phosphorylated. Phosphorylation upon DNA damage induces relocalization to the nuclear plasma.

Its subcellular location is the nucleus. The protein resides in the nucleolus. It localises to the nucleoplasm. The protein localises to the mitochondrion. In terms of biological role, structure-specific nuclease with 5'-flap endonuclease and 5'-3' exonuclease activities involved in DNA replication and repair. During DNA replication, cleaves the 5'-overhanging flap structure that is generated by displacement synthesis when DNA polymerase encounters the 5'-end of a downstream Okazaki fragment. It enters the flap from the 5'-end and then tracks to cleave the flap base, leaving a nick for ligation. Also involved in the long patch base excision repair (LP-BER) pathway, by cleaving within the apurinic/apyrimidinic (AP) site-terminated flap. Acts as a genome stabilization factor that prevents flaps from equilibrating into structures that lead to duplications and deletions. Also possesses 5'-3' exonuclease activity on nicked or gapped double-stranded DNA, and exhibits RNase H activity. Also involved in replication and repair of rDNA and in repairing mitochondrial DNA. The protein is Flap endonuclease 1-B of Oryza sativa subsp. indica (Rice).